A 243-amino-acid polypeptide reads, in one-letter code: Biosynthetic peptidoglycan transglycosylase (243 aa).

The chain crosses the membrane as a helical span at residues 21–43 (LLIVSLVSALMSVLQVIVFRFVD).

Belongs to the glycosyltransferase 51 family.

The protein resides in the cell inner membrane. It catalyses the reaction [GlcNAc-(1-&gt;4)-Mur2Ac(oyl-L-Ala-gamma-D-Glu-L-Lys-D-Ala-D-Ala)](n)-di-trans,octa-cis-undecaprenyl diphosphate + beta-D-GlcNAc-(1-&gt;4)-Mur2Ac(oyl-L-Ala-gamma-D-Glu-L-Lys-D-Ala-D-Ala)-di-trans,octa-cis-undecaprenyl diphosphate = [GlcNAc-(1-&gt;4)-Mur2Ac(oyl-L-Ala-gamma-D-Glu-L-Lys-D-Ala-D-Ala)](n+1)-di-trans,octa-cis-undecaprenyl diphosphate + di-trans,octa-cis-undecaprenyl diphosphate + H(+). It functions in the pathway cell wall biogenesis; peptidoglycan biosynthesis. In terms of biological role, peptidoglycan polymerase that catalyzes glycan chain elongation from lipid-linked precursors. This chain is Biosynthetic peptidoglycan transglycosylase, found in Xylella fastidiosa (strain M12).